A 126-amino-acid chain; its full sequence is Small ribosomal subunit protein uS12 (126 aa).

Position 89 is a 3-methylthioaspartic acid (Asp-89).

This sequence belongs to the universal ribosomal protein uS12 family. As to quaternary structure, part of the 30S ribosomal subunit. Contacts proteins S8 and S17. May interact with IF1 in the 30S initiation complex.

Functionally, with S4 and S5 plays an important role in translational accuracy. Interacts with and stabilizes bases of the 16S rRNA that are involved in tRNA selection in the A site and with the mRNA backbone. Located at the interface of the 30S and 50S subunits, it traverses the body of the 30S subunit contacting proteins on the other side and probably holding the rRNA structure together. The combined cluster of proteins S8, S12 and S17 appears to hold together the shoulder and platform of the 30S subunit. The sequence is that of Small ribosomal subunit protein uS12 from Polynucleobacter necessarius subsp. necessarius (strain STIR1).